The primary structure comprises 209 residues: Pyridoxal 5'-phosphate synthase subunit PdxT (209 aa).

58–60 (GES) lines the L-glutamine pocket. The active-site Nucleophile is Cys90. Residues Arg119 and 148 to 149 (IR) each bind L-glutamine. Residues His185 and Glu187 each act as charge relay system in the active site.

It belongs to the glutaminase PdxT/SNO family. In terms of assembly, in the presence of PdxS, forms a dodecamer of heterodimers. Only shows activity in the heterodimer.

The enzyme catalyses aldehydo-D-ribose 5-phosphate + D-glyceraldehyde 3-phosphate + L-glutamine = pyridoxal 5'-phosphate + L-glutamate + phosphate + 3 H2O + H(+). It carries out the reaction L-glutamine + H2O = L-glutamate + NH4(+). It participates in cofactor biosynthesis; pyridoxal 5'-phosphate biosynthesis. Its function is as follows. Catalyzes the hydrolysis of glutamine to glutamate and ammonia as part of the biosynthesis of pyridoxal 5'-phosphate. The resulting ammonia molecule is channeled to the active site of PdxS. In Clavibacter sepedonicus (Clavibacter michiganensis subsp. sepedonicus), this protein is Pyridoxal 5'-phosphate synthase subunit PdxT.